Reading from the N-terminus, the 441-residue chain is NADH-quinone oxidoreductase subunit D 1 (441 aa).

It belongs to the complex I 49 kDa subunit family. NDH-1 is composed of 14 different subunits. Subunits NuoB, C, D, E, F, and G constitute the peripheral sector of the complex.

The protein localises to the cell membrane. It catalyses the reaction a quinone + NADH + 5 H(+)(in) = a quinol + NAD(+) + 4 H(+)(out). NDH-1 shuttles electrons from NADH, via FMN and iron-sulfur (Fe-S) centers, to quinones in the respiratory chain. The immediate electron acceptor for the enzyme in this species is believed to be a menaquinone. Couples the redox reaction to proton translocation (for every two electrons transferred, four hydrogen ions are translocated across the cytoplasmic membrane), and thus conserves the redox energy in a proton gradient. The chain is NADH-quinone oxidoreductase subunit D 1 from Salinispora tropica (strain ATCC BAA-916 / DSM 44818 / JCM 13857 / NBRC 105044 / CNB-440).